The following is a 651-amino-acid chain: F-box only protein 43 (651 aa).

Disordered regions lie at residues 14-42 (MTAGAKKKADHQDTSVSQDSGYSDSLKGF) and 140-171 (LRRIPSHEGSLSNSFADSPRDGSYEPIATSTL). The segment covering 27 to 36 (TSVSQDSGYS) has biased composition (polar residues). Residue Ser-33 is modified to Phosphoserine; by PLK1. Thr-195 carries the phosphothreonine; by CaMK2 modification. Residues 424–499 (SGCFELPEDS…QDKSAHQRRK (76 aa)) enclose the F-box domain. The ZBR-type zinc-finger motif lies at 579 to 627 (ALKPCPRCQYPAKYQALKKRGTCSRKDCGFDFCSLCLCTFHGSKECGTG). The Zn(2+) site is built by Cys-583, Cys-586, Cys-601, Cys-606, Cys-611, Cys-614, His-619, and Cys-624.

In terms of assembly, part of a SCF (SKP1-cullin-F-box) protein ligase complex. Interaction with SKP1 does not occur. In terms of processing, phosphorylated on Thr-195 by CaMK2 in response to calcium during egg activation, which promotes subsequent phosphorylation by PLK1, ubiquitination and protesomal degradation. Ubiquitinated by FBXW1 during egg activation, which promotes proteasomal degradation.

Its pathway is protein modification; protein ubiquitination. Required to prevent anaphase onset in cytostatic factor-arrested oocytes. Inhibits the anaphase-promoting complex/cyclosome (APC/C) ubiquitin ligase and prevents cyclin degradation. Probably recognizes and binds to some phosphorylated proteins and promotes their ubiquitination and degradation. This Xenopus laevis (African clawed frog) protein is F-box only protein 43 (fbxo43).